A 471-amino-acid chain; its full sequence is Glutamate--tRNA ligase (471 aa).

The 'HIGH' region signature appears at 9–19; sequence PSPTGYLHVGG. Residues cysteine 98, cysteine 100, cysteine 125, and histidine 127 each coordinate Zn(2+). The short motif at 237–241 is the 'KMSKS' region element; the sequence is KLSKR. Position 240 (lysine 240) interacts with ATP.

This sequence belongs to the class-I aminoacyl-tRNA synthetase family. Glutamate--tRNA ligase type 1 subfamily. In terms of assembly, monomer. Zn(2+) is required as a cofactor.

Its subcellular location is the cytoplasm. It carries out the reaction tRNA(Glu) + L-glutamate + ATP = L-glutamyl-tRNA(Glu) + AMP + diphosphate. Its function is as follows. Catalyzes the attachment of glutamate to tRNA(Glu) in a two-step reaction: glutamate is first activated by ATP to form Glu-AMP and then transferred to the acceptor end of tRNA(Glu). In Salmonella arizonae (strain ATCC BAA-731 / CDC346-86 / RSK2980), this protein is Glutamate--tRNA ligase.